Consider the following 308-residue polypeptide: Putative mitochondrial transporter UCP3 (308 aa).

The Mitochondrial intermembrane segment spans residues 1-10 (MVGLKPPEVP). A helical membrane pass occupies residues 11–32 (PTTAVKLLGAGTAACFADLLTF). Solcar repeat units follow at residues 11–102 (PTTA…VKQL), 111–202 (SSIT…IKEK), and 211–296 (DNLP…LKRA). The Mitochondrial matrix portion of the chain corresponds to 33 to 73 (PLDTAKVRLQIQGENQAARSAQYRGVLGTILTMVRNEGPRS). The chain crosses the membrane as a helical span at residues 74 to 96 (PYNGLVAGLQRQMSFASIRIGLY). At 97–116 (DSVKQLYTPKGSDHSSITTR) the chain is on the mitochondrial intermembrane side. A helical transmembrane segment spans residues 117 to 133 (ILAGCTTGAMAVTCAQP). Residues 134–179 (TDVVKVRFQASIHAGPRSNRKYSGTMDAYRTIAREEGVRGLWKGIL) are Mitochondrial matrix-facing. A helical membrane pass occupies residues 180 to 196 (PNITRNAIVNCAEMVTY). The Mitochondrial intermembrane portion of the chain corresponds to 197–213 (DVIKEKVLDYHLLTDNL). Residues 214-233 (PCHFVSAFGAGFCATVVASP) traverse the membrane as a helical segment. Topologically, residues 234 to 267 (VDVVKTRYMNSPPGQYQNPLDCMLKMVTQEGPTA) are mitochondrial matrix. A helical transmembrane segment spans residues 268–290 (FYKGFTPSFLRLGSWNVVMFVSY). The interval 275–297 (SFLRLGSWNVVMFVSYEQLKRAL) is purine nucleotide binding. Topologically, residues 291–308 (EQLKRALMKVQMLRESPF) are mitochondrial intermembrane.

The protein belongs to the mitochondrial carrier (TC 2.A.29) family. Interacts with HAX1; the interaction is direct and calcium-dependent.

It localises to the mitochondrion inner membrane. Its function is as follows. Putative transmembrane transporter that plays a role in mitochondrial metabolism via an as yet unclear mechanism. Originally, this mitochondrial protein was thought to act as a proton transmembrane transporter from the mitochondrial intermembrane space into the matrix, causing proton leaks through the inner mitochondrial membrane, thereby uncoupling mitochondrial membrane potential generation from ATP synthesis. However, this function is controversial and uncoupling may not be the function, or at least not the main function, but rather a consequence of more conventional metabolite transporter activity. The sequence is that of Putative mitochondrial transporter UCP3 from Sus scrofa (Pig).